The primary structure comprises 198 residues: Probable opine utilization operon repressor (198 aa).

Its pathway is opine metabolism; mannopine biosynthesis [regulation]. Possible repressor for genes for mannityl-opine utilization and / or plasmid conjugative transfer. The chain is Probable opine utilization operon repressor (opnR) from Rhizobium rhizogenes (Agrobacterium rhizogenes).